The primary structure comprises 601 residues: Tripeptidyl-peptidase SED4 (601 aa).

Positions Met1–Ala22 are cleaved as a signal peptide. The propeptide at Ala23–Thr202 is removed in mature form. N-linked (GlcNAc...) asparagine glycans are attached at residues Asn210 and Asn281. One can recognise a Peptidase S53 domain in the interval Thr212–Tyr601. Catalysis depends on charge relay system residues Glu288 and Asp292. An N-linked (GlcNAc...) asparagine glycan is attached at Asn323. The Charge relay system role is filled by Ser504. Positions 546 and 547 each coordinate Ca(2+). Residue Asn575 is glycosylated (N-linked (GlcNAc...) asparagine). Positions 579 and 581 each coordinate Ca(2+).

The cofactor is Ca(2+).

It localises to the secreted. Its subcellular location is the extracellular space. It carries out the reaction Release of an N-terminal tripeptide from a polypeptide.. Functionally, secreted tripeptidyl-peptidase which degrades proteins at acidic pHs and is involved in virulence. The protein is Tripeptidyl-peptidase SED4 (SED4) of Arthroderma otae (strain ATCC MYA-4605 / CBS 113480) (Microsporum canis).